A 133-amino-acid chain; its full sequence is P2Y purinoceptor 2 (133 aa).

At 1-26 (ISVHRCLGVLRPLHSLRWGRARYARR) the chain is on the cytoplasmic side. A helical membrane pass occupies residues 27–47 (VAFAVWVLVLYCQAPVLYFVT). Residues 48-74 (TSTRSSRIICHDTSARELFSHFVAYSS) lie on the Extracellular side of the membrane. The chain crosses the membrane as a helical span at residues 75 to 95 (VMLSLLFAAPFAVILVCYVLM). The Cytoplasmic segment spans residues 96 to 116 (ARRLLKPAYGTSGGLPRAKRK). Residues 117 to 133 (SVRTIAIVLTVFVLCFL) traverse the membrane as a helical segment.

The protein belongs to the G-protein coupled receptor 1 family.

It is found in the cell membrane. Receptor for ATP and UTP coupled to G-proteins that activate a phosphatidylinositol-calcium second messenger system. This Bos taurus (Bovine) protein is P2Y purinoceptor 2 (P2RY2).